An 88-amino-acid polypeptide reads, in one-letter code: Large ribosomal subunit protein eL37 (88 aa).

The segment at 1-24 (MTKGTTSFGKRHNKSHTQCRRCGR) is disordered. The span at 9–24 (GKRHNKSHTQCRRCGR) shows a compositional bias: basic residues. Positions 19, 22, 34, and 37 each coordinate Zn(2+). Residues 19-37 (CRRCGRKSYHIQKKTCSSC) form a C4-type zinc finger.

The protein belongs to the eukaryotic ribosomal protein eL37 family. Zn(2+) serves as cofactor.

Its function is as follows. Binds to the 23S rRNA. The polypeptide is Large ribosomal subunit protein eL37 (RPL37) (Schistosoma mansoni (Blood fluke)).